We begin with the raw amino-acid sequence, 293 residues long: 4-diphosphocytidyl-2-C-methyl-D-erythritol kinase (293 aa).

Lys-16 is an active-site residue. Position 99 to 109 (99 to 109) interacts with ATP; sequence PMGAGLGGGSS. Residue Asp-141 is part of the active site.

It belongs to the GHMP kinase family. IspE subfamily.

It catalyses the reaction 4-CDP-2-C-methyl-D-erythritol + ATP = 4-CDP-2-C-methyl-D-erythritol 2-phosphate + ADP + H(+). Its pathway is isoprenoid biosynthesis; isopentenyl diphosphate biosynthesis via DXP pathway; isopentenyl diphosphate from 1-deoxy-D-xylulose 5-phosphate: step 3/6. Its function is as follows. Catalyzes the phosphorylation of the position 2 hydroxy group of 4-diphosphocytidyl-2C-methyl-D-erythritol. The protein is 4-diphosphocytidyl-2-C-methyl-D-erythritol kinase of Burkholderia cenocepacia (strain ATCC BAA-245 / DSM 16553 / LMG 16656 / NCTC 13227 / J2315 / CF5610) (Burkholderia cepacia (strain J2315)).